A 463-amino-acid polypeptide reads, in one-letter code: L-seryl-tRNA(Sec) selenium transferase (463 aa).

Lys-295 bears the N6-(pyridoxal phosphate)lysine mark.

This sequence belongs to the SelA family. Homodecamer; pentamer of dimers. Binds only one seryl-tRNA(Sec) per dimer. The cofactor is pyridoxal 5'-phosphate.

It localises to the cytoplasm. It catalyses the reaction L-seryl-tRNA(Sec) + selenophosphate + H(+) = L-selenocysteinyl-tRNA(Sec) + phosphate. It participates in aminoacyl-tRNA biosynthesis; selenocysteinyl-tRNA(Sec) biosynthesis; selenocysteinyl-tRNA(Sec) from L-seryl-tRNA(Sec) (bacterial route): step 1/1. Functionally, converts seryl-tRNA(Sec) to selenocysteinyl-tRNA(Sec) required for selenoprotein biosynthesis. The protein is L-seryl-tRNA(Sec) selenium transferase of Proteus mirabilis (strain HI4320).